Here is a 588-residue protein sequence, read N- to C-terminus: Beta-(1--&gt;2)glucan export ATP-binding/permease protein NdvA (588 aa).

The ABC transmembrane type-1 domain occupies 21–301 (VAVVVIANVI…MRQFVTQIFE (281 aa)). The next 6 helical transmembrane spans lie at 22–42 (AVVV…PVLF), 57–77 (PILI…VAVA), 136–156 (THLA…AMDL), 158–178 (LSFV…WVMG), 248–268 (TAST…VKNG), and 272–292 (VGDV…LDQM). Residues 335 to 569 (VEFRNINFGF…GGRFTSLLRT (235 aa)) enclose the ABC transporter domain. Position 368 to 375 (368 to 375 (GPTGAGKT)) interacts with ATP.

This sequence belongs to the ABC transporter superfamily. Beta-(1--&gt;2)glucan exporter (TC 3.A.1.108.1) family. As to quaternary structure, homodimer.

The protein localises to the cell inner membrane. It carries out the reaction [(1-&gt;2)-beta-D-glucosyl](n)(in) + ATP + H2O = [(1-&gt;2)-beta-D-glucosyl](n)(out) + ADP + phosphate + H(+). In terms of biological role, involved in beta-(1--&gt;2)glucan export which is required for crown gall tumor formation. Transmembrane domains (TMD) form a pore in the inner membrane and the ATP-binding domain (NBD) is responsible for energy generation. The sequence is that of Beta-(1--&gt;2)glucan export ATP-binding/permease protein NdvA from Rhizobium radiobacter (Agrobacterium tumefaciens).